A 157-amino-acid polypeptide reads, in one-letter code: Protein Smg homolog (157 aa).

It belongs to the Smg family.

This Shewanella loihica (strain ATCC BAA-1088 / PV-4) protein is Protein Smg homolog.